Reading from the N-terminus, the 331-residue chain is Nodulation protein D 2 (331 aa).

One can recognise an HTH lysR-type domain in the interval 6–63 (LDLNLLVALDALMTERSLTAAARKINLSQPAMSAAVARLRSYFRDELFAMRGRKLVPT). Residues 23–42 (LTAAARKINLSQPAMSAAVA) constitute a DNA-binding region (H-T-H motif).

It belongs to the LysR transcriptional regulatory family.

In terms of biological role, nodD regulates the expression of the nodABCFE genes which encode other nodulation proteins. NodD is also a negative regulator of its own expression. Binds flavonoids as inducers. This chain is Nodulation protein D 2 (nodD2), found in Bradyrhizobium elkanii.